The following is a 451-amino-acid chain: UDP-N-acetylmuramate--L-alanine ligase (451 aa).

110 to 116 contacts ATP; it reads GTHGKTT.

This sequence belongs to the MurCDEF family.

Its subcellular location is the cytoplasm. The enzyme catalyses UDP-N-acetyl-alpha-D-muramate + L-alanine + ATP = UDP-N-acetyl-alpha-D-muramoyl-L-alanine + ADP + phosphate + H(+). It participates in cell wall biogenesis; peptidoglycan biosynthesis. Cell wall formation. In Francisella tularensis subsp. tularensis (strain WY96-3418), this protein is UDP-N-acetylmuramate--L-alanine ligase.